The sequence spans 419 residues: O-methyltransferase gsfB (419 aa).

Residues 255–256, Asp-278, 300–301, and Arg-316 each bind S-adenosyl-L-methionine; these read GG and DF. His-320 acts as the Proton acceptor in catalysis.

It belongs to the class I-like SAM-binding methyltransferase superfamily. Cation-independent O-methyltransferase family.

It carries out the reaction 2-(2,4-dihydroxy-6-oxidobenzoyl)-5-hydroxy-3-methylbenzenolate + S-adenosyl-L-methionine = griseophenone D + S-adenosyl-L-homocysteine + H(+). Its pathway is secondary metabolite biosynthesis; terpenoid biosynthesis. Functionally, O-methyltransferase; part of the gene cluster that mediates the biosynthesis of griseofulvin, an important antifungal drug that has been in use for a long time for treating dermatophyte infections. The first step of the pathway is the formation of the heptaketide backbone by gsfA which is initiated by priming with acetyl-CoA, followed by sequential condensations of 6 malonyl-CoA units. The resulting benzophenone can undergo a spontaneous dehydration to form norlichexanthone. However, the true precursor for the griseofulvin biosynthesis is not norlichexanthone, but the heptaketide benzophenone that is O-methylated at 3-OH by gsfB to produce griseophenone D which is further methylated at 9-OH by gsfC to yield griseophenone C. Griseophenone C is then substrate of halogenase gsfI which is responsible for the regio-specific chlorination at the C13 position to form griseophenone B. The cytochrome P450 gsfF catalyzes the coupling of orcinol and phloroglucinol rings in griseophenone B to form desmethyl-dehydrogriseofulvin A which is further methylated at 5-OH by gsfD to yield dehydrogriseofulvin. Finally, gsfE performs stereospecific reduction of enone 18 of dehydrogriseofulvin to afford the final product griseofulvin. In Penicillium aethiopicum, this protein is O-methyltransferase gsfB.